The sequence spans 156 residues: SsrA-binding protein (156 aa).

Residues 135 to 156 (HALRERQDRREADRAMSERKDR) form a disordered region.

It belongs to the SmpB family.

It is found in the cytoplasm. In terms of biological role, required for rescue of stalled ribosomes mediated by trans-translation. Binds to transfer-messenger RNA (tmRNA), required for stable association of tmRNA with ribosomes. tmRNA and SmpB together mimic tRNA shape, replacing the anticodon stem-loop with SmpB. tmRNA is encoded by the ssrA gene; the 2 termini fold to resemble tRNA(Ala) and it encodes a 'tag peptide', a short internal open reading frame. During trans-translation Ala-aminoacylated tmRNA acts like a tRNA, entering the A-site of stalled ribosomes, displacing the stalled mRNA. The ribosome then switches to translate the ORF on the tmRNA; the nascent peptide is terminated with the 'tag peptide' encoded by the tmRNA and targeted for degradation. The ribosome is freed to recommence translation, which seems to be the essential function of trans-translation. In Kineococcus radiotolerans (strain ATCC BAA-149 / DSM 14245 / SRS30216), this protein is SsrA-binding protein.